The chain runs to 393 residues: Riboflavin biosynthesis protein RibBA (393 aa).

A DHBP synthase region spans residues 1–200 (MQFDNIDSAL…IDDLIEYRKK (200 aa)). D-ribulose 5-phosphate contacts are provided by residues 27–28 (RE), aspartate 32, 139–143 (RNGHT), and glutamate 163. Glutamate 28 lines the Mg(2+) pocket. Histidine 142 is a binding site for Mg(2+). The interval 201-393 (LEPEIEFKAK…TKKIKMGHLI (193 aa)) is GTP cyclohydrolase II. Residue 249 to 253 (RLHSA) participates in GTP binding. Cysteine 254, cysteine 265, and cysteine 267 together coordinate Zn(2+). GTP is bound by residues glutamine 270, 291 to 293 (EGR), and threonine 313. The active-site Proton acceptor; for GTP cyclohydrolase activity is aspartate 325. Residue arginine 327 is the Nucleophile; for GTP cyclohydrolase activity of the active site. Residues serine 348 and lysine 353 each coordinate GTP.

It in the N-terminal section; belongs to the DHBP synthase family. The protein in the C-terminal section; belongs to the GTP cyclohydrolase II family. Mg(2+) is required as a cofactor. Mn(2+) serves as cofactor. It depends on Zn(2+) as a cofactor.

The enzyme catalyses D-ribulose 5-phosphate = (2S)-2-hydroxy-3-oxobutyl phosphate + formate + H(+). It carries out the reaction GTP + 4 H2O = 2,5-diamino-6-hydroxy-4-(5-phosphoribosylamino)-pyrimidine + formate + 2 phosphate + 3 H(+). It participates in cofactor biosynthesis; riboflavin biosynthesis; 2-hydroxy-3-oxobutyl phosphate from D-ribulose 5-phosphate: step 1/1. Its pathway is cofactor biosynthesis; riboflavin biosynthesis; 5-amino-6-(D-ribitylamino)uracil from GTP: step 1/4. In terms of biological role, catalyzes the conversion of D-ribulose 5-phosphate to formate and 3,4-dihydroxy-2-butanone 4-phosphate. Its function is as follows. Catalyzes the conversion of GTP to 2,5-diamino-6-ribosylamino-4(3H)-pyrimidinone 5'-phosphate (DARP), formate and pyrophosphate. The chain is Riboflavin biosynthesis protein RibBA from Staphylococcus aureus (strain Mu50 / ATCC 700699).